Reading from the N-terminus, the 542-residue chain is Protein NODULATION SIGNALING PATHWAY 1 (542 aa).

A disordered region spans residues 73 to 150 (TSTTSLEPCG…SNCNSGNSKE (78 aa)). The span at 92–103 (LPKKRNATDESS) shows a compositional bias: basic and acidic residues. Positions 136–148 (AKANGSNCNSGNS) are enriched in low complexity. In terms of domain architecture, GRAS spans 145–532 (SGNSKEGRWA…QPVSFCSLWK (388 aa)). A leucine repeat I (LRI) region spans residues 152–214 (RWAEQLLNPC…HLSSSSSSPT (63 aa)). Positions 233-332 (LLKFYEVSPW…GYNYYPRLLG (100 aa)) are VHIID. The VHIID signature appears at 269–273 (LHILD). Positions 333 to 357 (YAQSININLQINRIENHSLQTLNAQ) are leucine repeat II (LRII). The interval 367 to 452 (LIVCAQFRLH…RESDERRVME (86 aa)) is PFYRE. The SAW stretch occupies residues 455–532 (AAKALTNQRE…QPVSFCSLWK (78 aa)).

It belongs to the GRAS family. Highly expressed in roots.

Its subcellular location is the nucleus. In terms of biological role, transcriptional regulator essential for Nod-factor-induced gene expression. Acts downstream of calcium spiking and a calcium/calmodulin-dependent protein kinase required for activation of early nodulation gene expression. Acts as a common symbiosis gene that positively contributes to the early steps of the arbuscular mycorrhizal fungus and rhizobial infection processes in roots. Transcription factor involved in the positive regulation of the beta-carotene isomerase D27, which participates in a pathway leading to biosynthesis of strigolactones in roots. The chain is Protein NODULATION SIGNALING PATHWAY 1 from Lotus japonicus (Lotus corniculatus var. japonicus).